The chain runs to 444 residues: Na(+)-translocating NADH-quinone reductase subunit A (444 aa).

This sequence belongs to the NqrA family. Composed of six subunits; NqrA, NqrB, NqrC, NqrD, NqrE and NqrF.

The enzyme catalyses a ubiquinone + n Na(+)(in) + NADH + H(+) = a ubiquinol + n Na(+)(out) + NAD(+). In terms of biological role, NQR complex catalyzes the reduction of ubiquinone-1 to ubiquinol by two successive reactions, coupled with the transport of Na(+) ions from the cytoplasm to the periplasm. NqrA to NqrE are probably involved in the second step, the conversion of ubisemiquinone to ubiquinol. The sequence is that of Na(+)-translocating NADH-quinone reductase subunit A from Shewanella denitrificans (strain OS217 / ATCC BAA-1090 / DSM 15013).